A 667-amino-acid polypeptide reads, in one-letter code: MSSQPAGNQTSPGATEDYSYGSWYIDEPQGGEELQPEGEVPSCHTSIPPGLYHACLASLSILVLLLLAMLVRRRQLWPDCVRGRPGLPSPVDFLAGDRPRAVPAAVFMVLLSSLCLLLPDEDALPFLTLASAPSQDGKTEAPRGAWKILGLFYYAALYYPLAACATAGHTAAHLLGSTLSWAHLGVQVWQRAECPQVPKIYKYYSLLASLPLLLGLGFLSLWYPVQLVRSFSRRTGAGSKGLQSSYSEEYLRNLLCRKKLGSSYHTSKHGFLSWARVCLRHCIYTPQPGFHLPLKLVLSATLTGTAIYQVALLLLVGVVPTIQKVRAGVTTDVSYLLAGFGIVLSEDKQEVVELVKHHLWALEVCYISALVLSCLLTFLVLMRSLVTHRTNLRALHRGAALDLSPLHRSPHPSRQAIFCWMSFSAYQTAFICLGLLVQQIIFFLGTTALAFLVLMPVLHGRNLLLFRSLESSWPFWLTLALAVILQNMAAHWVFLETHDGHPQLTNRRVLYAATFLLFPLNVLVGAMVATWRVLLSALYNAIHLGQMDLSLLPPRAATLDPGYYTYRNFLKIEVSQSHPAMTAFCSLLLQAQSLLPRTMAAPQDSLRPGEEDEGMQLLQTKDSMAKGARPGASRGRARWGLAYTLLHNPTLQVFRKTALLGANGAQP.

A compositionally biased stretch (polar residues) spans methionine 1 to glycine 13. The tract at residues methionine 1–tyrosine 20 is disordered. Topologically, residues methionine 1–glycine 50 are extracellular. An N-linked (GlcNAc...) asparagine glycan is attached at asparagine 8. Residues leucine 51–valine 71 form a helical membrane-spanning segment. Over arginine 72–arginine 100 the chain is Cytoplasmic. Residues alanine 101–glutamate 121 traverse the membrane as a helical segment. Residues aspartate 122–glycine 144 lie on the Extracellular side of the membrane. The helical transmembrane segment at alanine 145–alanine 165 threads the bilayer. At threonine 166 to glycine 168 the chain is on the cytoplasmic side. The helical transmembrane segment at histidine 169–tryptophan 189 threads the bilayer. At glutamine 190–serine 205 the chain is on the extracellular side. The chain crosses the membrane as a helical span at residues leucine 206 to glutamine 226. Topologically, residues leucine 227–lysine 295 are cytoplasmic. The segment at threonine 235 to proline 293 is interaction with RBP1. The chain crosses the membrane as a helical span at residues leucine 296–valine 316. At glycine 317–isoleucine 367 the chain is on the extracellular side. The helical transmembrane segment at serine 368–histidine 388 threads the bilayer. The Cytoplasmic portion of the chain corresponds to arginine 389–serine 422. A helical membrane pass occupies residues phenylalanine 423–phenylalanine 443. Topologically, residues leucine 444–tryptophan 473 are extracellular. A helical membrane pass occupies residues proline 474–phenylalanine 494. Over leucine 495–valine 509 the chain is Cytoplasmic. Residues leucine 510–methionine 547 constitute an intramembrane region (helical). Over aspartate 548 to proline 667 the chain is Cytoplasmic. Tyrosine 643 carries the post-translational modification Phosphotyrosine.

Homodimer. Interacts with JAK2 and STAT5. Interacts (via extracellular domains) with RBP4. Interacts (via cytoplasmic domains) with RBP1. Phosphorylated on tyrosine residues in response to RBP4 binding. Phosphorylation requires the presence of LRAT, suggesting it may be triggered by the uptake of retinol that is then metabolized within the cell to retinoids that function as signaling molecules. As to expression, broad expression. In adult eye expressed in sclera, retina, retinal pigment epithelium, and trabecular meshwork but not in choroid and iris.

It localises to the cell membrane. Functions as a retinol transporter. Accepts all-trans retinol from the extracellular retinol-binding protein RBP4, facilitates retinol transport across the cell membrane, and then transfers retinol to the cytoplasmic retinol-binding protein RBP1. Retinol uptake is enhanced by LRAT, an enzyme that converts retinol to all-trans retinyl esters, the storage forms of vitamin A. Contributes to the activation of a signaling cascade that depends on retinol transport and LRAT-dependent generation of retinol metabolites that then trigger activation of JAK2 and its target STAT5, and ultimately increase the expression of SOCS3 and inhibit cellular responses to insulin. Important for the homeostasis of vitamin A and its derivatives, such as retinoic acid. STRA6-mediated transport is particularly important in the eye, and under conditions of dietary vitamin A deficiency. Does not transport retinoic acid. The polypeptide is Receptor for retinol uptake STRA6 (STRA6) (Homo sapiens (Human)).